A 253-amino-acid polypeptide reads, in one-letter code: uncharacterized protein (253 aa).

2 consecutive C2HC LYAR-type zinc fingers follow at residues 1–26 (MVFFSCNNCGEACKKNQVERHLFQCR) and 27–51 (NTTFSCIDCQLVYTRETYKDHVKCI). Positions 6, 9, 21, 25, 32, 35, 47, and 50 each coordinate Zn(2+). Residues 136-171 (AAEADKMREEAIRKQEETQKMEKAQKEAAAAAKKET) are a coiled coil.

Its subcellular location is the nucleus. This is an uncharacterized protein from Caenorhabditis elegans.